The following is a 473-amino-acid chain: ATP synthase subunit beta (473 aa).

158-165 (GGAGVGKT) provides a ligand contact to ATP.

It belongs to the ATPase alpha/beta chains family. As to quaternary structure, F-type ATPases have 2 components, CF(1) - the catalytic core - and CF(0) - the membrane proton channel. CF(1) has five subunits: alpha(3), beta(3), gamma(1), delta(1), epsilon(1). CF(0) has three main subunits: a(1), b(2) and c(9-12). The alpha and beta chains form an alternating ring which encloses part of the gamma chain. CF(1) is attached to CF(0) by a central stalk formed by the gamma and epsilon chains, while a peripheral stalk is formed by the delta and b chains.

The protein resides in the cell membrane. It catalyses the reaction ATP + H2O + 4 H(+)(in) = ADP + phosphate + 5 H(+)(out). Functionally, produces ATP from ADP in the presence of a proton gradient across the membrane. The catalytic sites are hosted primarily by the beta subunits. This chain is ATP synthase subunit beta, found in Geobacillus sp. (strain WCH70).